A 413-amino-acid polypeptide reads, in one-letter code: E3 ubiquitin-protein ligase makorin (413 aa).

C3H1-type zinc fingers lie at residues 2–29 (PRHETDCRYFANGYCSKGNTCTFTHDVA) and 30–57 (TRNENICHFNLVGKCSYGRACRFLHTRP). The interval 61 to 85 (ELPSCSTPQTSQNQQNLQNSGQRVR) is disordered. Low complexity predominate over residues 66–82 (STPQTSQNQQNLQNSGQ). Residues 138-167 (QAQLMMCPYHQKSGDCNRQDMDCPFAHGNY) form a C3H1-type 3 zinc finger. The RING-type zinc finger occupies 213–267 (CGICMENIFEKNLRFGILNGCQHCFCLDCIRQWRSKDQENVELATKTVRSCPECR). The C3H1-type 4 zinc finger occupies 296-327 (NTKRKICKYYSNERSRGACPFGNKCFYKHQLP).

Component of a complex at least containing lep-2, lin-28 and the long non-coding RNA lep-5, which mediates the degradation of lin-28. As to expression, expressed in seam, tail tip, and other hypodermal cells, head and tail neurons, the pharynx, intestine and the developing hermaphrodite somatic gonad. Not expressed in body wall muscle cells.

It localises to the cytoplasm. The enzyme catalyses S-ubiquitinyl-[E2 ubiquitin-conjugating enzyme]-L-cysteine + [acceptor protein]-L-lysine = [E2 ubiquitin-conjugating enzyme]-L-cysteine + N(6)-ubiquitinyl-[acceptor protein]-L-lysine.. Its pathway is protein modification; protein ubiquitination. Its function is as follows. E3 ubiquitin ligase which catalyzes the covalent attachment of ubiquitin moieties onto substrate proteins. Promotes the larval to adult transition by binding to the long non-coding RNA lep-5 to target the heterochronic protein lin-28 for degradation by the proteasome. This association and degradation of lin-28 also controls the timing of the sexual differentiation of individual neurons in males including the AIM, AWA, ADF, ASJ and CEM neurons. Plays a role in governing the developmental timing of male tail tip morphogenesis. Plays a role in two aspects of male mating behavior: response to hermaphrodite contact and vulva location. May play a role in the detection of preferred food sources. The polypeptide is E3 ubiquitin-protein ligase makorin (Caenorhabditis elegans).